A 327-amino-acid polypeptide reads, in one-letter code: Zinc transport protein ZntB (327 aa).

At 1–271 (MESFAGKELQ…AMNRRTYTMS (271 aa)) the chain is on the cytoplasmic side. Residues 272–292 (LLAMVFLPTTFLTGLFGVNLG) traverse the membrane as a helical segment. Residues 293–300 (GIPGGDAP) are Periplasmic-facing. A helical membrane pass occupies residues 301-321 (FGFFTFCLMLVILVGGVAWWL). Residues 322-327 (KRSKWL) are Cytoplasmic-facing.

The protein belongs to the CorA metal ion transporter (MIT) (TC 1.A.35) family.

It is found in the cell inner membrane. The catalysed reaction is Zn(2+)(out) + H(+)(out) = Zn(2+)(in) + H(+)(in). Zinc transporter. Acts as a Zn(2+):proton symporter, which likely mediates zinc ion uptake. This is Zinc transport protein ZntB from Pectobacterium atrosepticum (strain SCRI 1043 / ATCC BAA-672) (Erwinia carotovora subsp. atroseptica).